The sequence spans 401 residues: MRTLWQHCHVATMADGRYSAIEDAAIVTSAGLIEWIGPRAELAPVEADRTVDLGGAWVTPGLIDCHTHAVFGGNRSGEFEQRLQGVSYAEIAAQGGGIASTVRATRAASEDELFASARQRVQALMRDGVTTLEVKSGYGLDLANERKMLRVARRLADELPLTVRATCLAAHALPPEYAGRADDYIAHICDEMLPALAGEGLVDAVDAFCEHLAFSPAQVERLFIKARELGLPVKLHAEQLSSLHGSSLAARYQALSADHLEFMTEEDAVAMANAGTVAVLLPGAFYFLRETQLPPMDALRRHGVKIALASDLNPGTSPGLSLRLMLNMGCTCFRMTPEEALAGVTVHAATALGLGDSHGSLQVGKVADFVAWQIERPADLAYWLGGDLPKRVVRMGHEISN.

Positions 66 and 68 each coordinate Fe(3+). Positions 66 and 68 each coordinate Zn(2+). Arg75, Tyr138, and His171 together coordinate 4-imidazolone-5-propanoate. An N-formimidoyl-L-glutamate-binding site is contributed by Tyr138. His236 lines the Fe(3+) pocket. Residue His236 participates in Zn(2+) binding. Gln239 is a binding site for 4-imidazolone-5-propanoate. Residue Asp311 participates in Fe(3+) binding. Asp311 is a binding site for Zn(2+). Residues Asn313 and Gly315 each contribute to the N-formimidoyl-L-glutamate site. A 4-imidazolone-5-propanoate-binding site is contributed by Thr316.

The protein belongs to the metallo-dependent hydrolases superfamily. HutI family. Requires Zn(2+) as cofactor. Fe(3+) is required as a cofactor.

It is found in the cytoplasm. The catalysed reaction is 4-imidazolone-5-propanoate + H2O = N-formimidoyl-L-glutamate. It participates in amino-acid degradation; L-histidine degradation into L-glutamate; N-formimidoyl-L-glutamate from L-histidine: step 3/3. Catalyzes the hydrolytic cleavage of the carbon-nitrogen bond in imidazolone-5-propanoate to yield N-formimidoyl-L-glutamate. It is the third step in the universal histidine degradation pathway. This is Imidazolonepropionase from Pseudomonas putida (strain ATCC 700007 / DSM 6899 / JCM 31910 / BCRC 17059 / LMG 24140 / F1).